A 657-amino-acid chain; its full sequence is Glycogen debranching enzyme (657 aa).

The active-site Nucleophile is Asp336. The Proton donor role is filled by Glu371. Positions 460–479 (ANGEENRDGTNNNYSNNHGK) are disordered.

It belongs to the glycosyl hydrolase 13 family.

The enzyme catalyses Hydrolysis of (1-&gt;6)-alpha-D-glucosidic linkages to branches with degrees of polymerization of three or four glucose residues in limit dextrin.. It participates in glycan degradation; glycogen degradation. Its function is as follows. Removes maltotriose and maltotetraose chains that are attached by 1,6-alpha-linkage to the limit dextrin main chain, generating a debranched limit dextrin. This is Glycogen debranching enzyme from Escherichia coli (strain SMS-3-5 / SECEC).